Consider the following 393-residue polypeptide: UDP-N-acetylglucosamine--N-acetylmuramyl-(pentapeptide) pyrophosphoryl-undecaprenol N-acetylglucosamine transferase (393 aa).

UDP-N-acetyl-alpha-D-glucosamine contacts are provided by residues 15–17 (TAG), asparagine 129, arginine 171, serine 211, and glutamine 322.

Belongs to the glycosyltransferase 28 family. MurG subfamily.

The protein localises to the cell membrane. The enzyme catalyses di-trans,octa-cis-undecaprenyl diphospho-N-acetyl-alpha-D-muramoyl-L-alanyl-D-glutamyl-meso-2,6-diaminopimeloyl-D-alanyl-D-alanine + UDP-N-acetyl-alpha-D-glucosamine = di-trans,octa-cis-undecaprenyl diphospho-[N-acetyl-alpha-D-glucosaminyl-(1-&gt;4)]-N-acetyl-alpha-D-muramoyl-L-alanyl-D-glutamyl-meso-2,6-diaminopimeloyl-D-alanyl-D-alanine + UDP + H(+). Its pathway is cell wall biogenesis; peptidoglycan biosynthesis. Functionally, cell wall formation. Catalyzes the transfer of a GlcNAc subunit on undecaprenyl-pyrophosphoryl-MurNAc-pentapeptide (lipid intermediate I) to form undecaprenyl-pyrophosphoryl-MurNAc-(pentapeptide)GlcNAc (lipid intermediate II). This is UDP-N-acetylglucosamine--N-acetylmuramyl-(pentapeptide) pyrophosphoryl-undecaprenol N-acetylglucosamine transferase from Bifidobacterium longum (strain DJO10A).